The sequence spans 366 residues: Chorismate synthase (366 aa).

Arg-48 and Arg-54 together coordinate NADP(+). Residues 125 to 127 (RSS), 241 to 242 (NA), Gly-285, 300 to 304 (KPTSS), and Arg-326 each bind FMN.

Belongs to the chorismate synthase family. In terms of assembly, homotetramer. FMNH2 is required as a cofactor.

It catalyses the reaction 5-O-(1-carboxyvinyl)-3-phosphoshikimate = chorismate + phosphate. The protein operates within metabolic intermediate biosynthesis; chorismate biosynthesis; chorismate from D-erythrose 4-phosphate and phosphoenolpyruvate: step 7/7. Functionally, catalyzes the anti-1,4-elimination of the C-3 phosphate and the C-6 proR hydrogen from 5-enolpyruvylshikimate-3-phosphate (EPSP) to yield chorismate, which is the branch point compound that serves as the starting substrate for the three terminal pathways of aromatic amino acid biosynthesis. This reaction introduces a second double bond into the aromatic ring system. The chain is Chorismate synthase from Cereibacter sphaeroides (strain ATCC 17029 / ATH 2.4.9) (Rhodobacter sphaeroides).